The sequence spans 243 residues: NADH-ubiquinone oxidoreductase chain 6 (243 aa).

The next 5 membrane-spanning stretches (helical) occupy residues isoleucine 16–valine 36, isoleucine 41–leucine 61, alanine 69–isoleucine 89, isoleucine 104–tyrosine 124, and isoleucine 201–isoleucine 221.

This sequence belongs to the complex I subunit 6 family.

It is found in the mitochondrion membrane. It carries out the reaction a ubiquinone + NADH + 5 H(+)(in) = a ubiquinol + NAD(+) + 4 H(+)(out). Functionally, core subunit of the mitochondrial membrane respiratory chain NADH dehydrogenase (Complex I) that is believed to belong to the minimal assembly required for catalysis. Complex I functions in the transfer of electrons from NADH to the respiratory chain. The immediate electron acceptor for the enzyme is believed to be ubiquinone. This chain is NADH-ubiquinone oxidoreductase chain 6 (ndh-6), found in Neurospora crassa (strain ATCC 24698 / 74-OR23-1A / CBS 708.71 / DSM 1257 / FGSC 987).